Consider the following 138-residue polypeptide: Basic phospholipase A2 homolog TM-N49 (138 aa).

Residues methionine 1 to glycine 16 form the signal peptide. 7 disulfides stabilise this stretch: cysteine 42–cysteine 131, cysteine 44–cysteine 60, cysteine 59–cysteine 111, cysteine 65–cysteine 138, cysteine 66–cysteine 104, cysteine 73–cysteine 97, and cysteine 91–cysteine 102.

It belongs to the phospholipase A2 family. Group II subfamily. N49 sub-subfamily. Homodimer; non-covalently linked. As to expression, expressed by the venom gland.

It localises to the secreted. Its function is as follows. Snake venom phospholipase A2 (PLA2) that exhibits potent myotoxic activity causing inflammatory cell infiltration, severe myoedema, myonecrosis and myolysis in the gastrocnemius muscles of BALB/c mice. This is Basic phospholipase A2 homolog TM-N49 from Protobothrops mucrosquamatus (Taiwan habu).